The following is a 455-amino-acid chain: Bifunctional protein GlmU (455 aa).

The segment at 1-226 (MGLSVVILAA…EFEILGVNDR (226 aa)) is pyrophosphorylase. UDP-N-acetyl-alpha-D-glucosamine is bound by residues 8–11 (LAAG), Lys-22, Gln-73, 78–79 (GT), 99–101 (YGD), Gly-136, Glu-151, Asn-166, and Asn-224. Asp-101 provides a ligand contact to Mg(2+). Asn-224 contributes to the Mg(2+) binding site. The tract at residues 227–247 (TQLASLERVWQRNVAEKIMAK) is linker. Residues 248 to 455 (GVSIADPNRF…WQRSVKKTDK (208 aa)) are N-acetyltransferase. Positions 330 and 348 each coordinate UDP-N-acetyl-alpha-D-glucosamine. His-360 serves as the catalytic Proton acceptor. UDP-N-acetyl-alpha-D-glucosamine is bound by residues Tyr-363 and Asn-374. Acetyl-CoA-binding positions include Ala-377, 383–384 (NY), Ser-402, Ala-420, and Arg-437.

This sequence in the N-terminal section; belongs to the N-acetylglucosamine-1-phosphate uridyltransferase family. It in the C-terminal section; belongs to the transferase hexapeptide repeat family. In terms of assembly, homotrimer. Mg(2+) is required as a cofactor.

The protein resides in the cytoplasm. It carries out the reaction alpha-D-glucosamine 1-phosphate + acetyl-CoA = N-acetyl-alpha-D-glucosamine 1-phosphate + CoA + H(+). The catalysed reaction is N-acetyl-alpha-D-glucosamine 1-phosphate + UTP + H(+) = UDP-N-acetyl-alpha-D-glucosamine + diphosphate. It functions in the pathway nucleotide-sugar biosynthesis; UDP-N-acetyl-alpha-D-glucosamine biosynthesis; N-acetyl-alpha-D-glucosamine 1-phosphate from alpha-D-glucosamine 6-phosphate (route II): step 2/2. It participates in nucleotide-sugar biosynthesis; UDP-N-acetyl-alpha-D-glucosamine biosynthesis; UDP-N-acetyl-alpha-D-glucosamine from N-acetyl-alpha-D-glucosamine 1-phosphate: step 1/1. Its pathway is bacterial outer membrane biogenesis; LPS lipid A biosynthesis. Its function is as follows. Catalyzes the last two sequential reactions in the de novo biosynthetic pathway for UDP-N-acetylglucosamine (UDP-GlcNAc). The C-terminal domain catalyzes the transfer of acetyl group from acetyl coenzyme A to glucosamine-1-phosphate (GlcN-1-P) to produce N-acetylglucosamine-1-phosphate (GlcNAc-1-P), which is converted into UDP-GlcNAc by the transfer of uridine 5-monophosphate (from uridine 5-triphosphate), a reaction catalyzed by the N-terminal domain. This chain is Bifunctional protein GlmU, found in Francisella tularensis subsp. holarctica (strain OSU18).